Consider the following 275-residue polypeptide: MLKDIFGKKKYATITLYKDNAGPAVPSNTHSSKSNGNPVSEMKENKRMGARSRIAALIDKDTFIEYDSELESCNPLSFPKYAEKILAAMETSMEKDAVITGEGTIRGESCVLCVMNPDFMMGSMGSVVGEKITRAIEKAIEKKLPVIIFCASGGARMQEGILSLMQMAKTSAALGRLGEAGLLYISVLTDPTTGGVTASFAMLGDIIIAEPGALIGFAGPRVIEQTIRQKLPEGFQRSEFLLEKGFIDQIVSRKDMRNTLASLLRIHRLGGEMHA.

Positions 18-275 (KDNAGPAVPS…IHRLGGEMHA (258 aa)) constitute a CoA carboxyltransferase N-terminal domain. Positions 23–47 (PAVPSNTHSSKSNGNPVSEMKENKR) are disordered. Over residues 26–38 (PSNTHSSKSNGNP) the composition is skewed to polar residues.

The protein belongs to the AccD/PCCB family. As to quaternary structure, acetyl-CoA carboxylase is a heterohexamer composed of biotin carboxyl carrier protein (AccB), biotin carboxylase (AccC) and two subunits each of ACCase subunit alpha (AccA) and ACCase subunit beta (AccD).

It localises to the cytoplasm. It catalyses the reaction N(6)-carboxybiotinyl-L-lysyl-[protein] + acetyl-CoA = N(6)-biotinyl-L-lysyl-[protein] + malonyl-CoA. It functions in the pathway lipid metabolism; malonyl-CoA biosynthesis; malonyl-CoA from acetyl-CoA: step 1/1. Its function is as follows. Component of the acetyl coenzyme A carboxylase (ACC) complex. Biotin carboxylase (BC) catalyzes the carboxylation of biotin on its carrier protein (BCCP) and then the CO(2) group is transferred by the transcarboxylase to acetyl-CoA to form malonyl-CoA. The polypeptide is Acetyl-coenzyme A carboxylase carboxyl transferase subunit beta (Alkaliphilus oremlandii (strain OhILAs) (Clostridium oremlandii (strain OhILAs))).